Consider the following 137-residue polypeptide: Venom allergen 4 (137 aa).

Residues Met-1 to Ala-19 form the signal peptide.

It belongs to the ant venom allergen 2/4 family. In terms of assembly, monomer. As to expression, expressed by the venom gland.

It localises to the secreted. The polypeptide is Venom allergen 4 (Solenopsis geminata (Tropical fire ant)).